The following is a 123-amino-acid chain: Small ribosomal subunit protein uS12 (123 aa).

Residues 1 to 24 (MPTINQLIRKERKKQVKKSKSPAL) form a disordered region. Residues 10–20 (KERKKQVKKSK) show a composition bias toward basic residues. Asp89 bears the 3-methylthioaspartic acid mark.

It belongs to the universal ribosomal protein uS12 family. As to quaternary structure, part of the 30S ribosomal subunit. Contacts proteins S8 and S17. May interact with IF1 in the 30S initiation complex.

Functionally, with S4 and S5 plays an important role in translational accuracy. Interacts with and stabilizes bases of the 16S rRNA that are involved in tRNA selection in the A site and with the mRNA backbone. Located at the interface of the 30S and 50S subunits, it traverses the body of the 30S subunit contacting proteins on the other side and probably holding the rRNA structure together. The combined cluster of proteins S8, S12 and S17 appears to hold together the shoulder and platform of the 30S subunit. In Sulfurovum sp. (strain NBC37-1), this protein is Small ribosomal subunit protein uS12.